A 316-amino-acid polypeptide reads, in one-letter code: 4-hydroxy-3-methylbut-2-enyl diphosphate reductase (316 aa).

Cys-12 lines the [4Fe-4S] cluster pocket. 2 residues coordinate (2E)-4-hydroxy-3-methylbut-2-enyl diphosphate: His-41 and His-74. Dimethylallyl diphosphate-binding residues include His-41 and His-74. Isopentenyl diphosphate contacts are provided by His-41 and His-74. Cys-96 is a binding site for [4Fe-4S] cluster. Position 124 (His-124) interacts with (2E)-4-hydroxy-3-methylbut-2-enyl diphosphate. His-124 contributes to the dimethylallyl diphosphate binding site. His-124 lines the isopentenyl diphosphate pocket. The Proton donor role is filled by Glu-126. Thr-165 is a binding site for (2E)-4-hydroxy-3-methylbut-2-enyl diphosphate. Cys-195 provides a ligand contact to [4Fe-4S] cluster. The (2E)-4-hydroxy-3-methylbut-2-enyl diphosphate site is built by Ser-223, Ser-224, Asn-225, and Ser-267. Dimethylallyl diphosphate-binding residues include Ser-223, Ser-224, Asn-225, and Ser-267. The isopentenyl diphosphate site is built by Ser-223, Ser-224, Asn-225, and Ser-267.

It belongs to the IspH family. [4Fe-4S] cluster serves as cofactor.

The catalysed reaction is isopentenyl diphosphate + 2 oxidized [2Fe-2S]-[ferredoxin] + H2O = (2E)-4-hydroxy-3-methylbut-2-enyl diphosphate + 2 reduced [2Fe-2S]-[ferredoxin] + 2 H(+). It carries out the reaction dimethylallyl diphosphate + 2 oxidized [2Fe-2S]-[ferredoxin] + H2O = (2E)-4-hydroxy-3-methylbut-2-enyl diphosphate + 2 reduced [2Fe-2S]-[ferredoxin] + 2 H(+). It participates in isoprenoid biosynthesis; dimethylallyl diphosphate biosynthesis; dimethylallyl diphosphate from (2E)-4-hydroxy-3-methylbutenyl diphosphate: step 1/1. Its pathway is isoprenoid biosynthesis; isopentenyl diphosphate biosynthesis via DXP pathway; isopentenyl diphosphate from 1-deoxy-D-xylulose 5-phosphate: step 6/6. Its function is as follows. Catalyzes the conversion of 1-hydroxy-2-methyl-2-(E)-butenyl 4-diphosphate (HMBPP) into a mixture of isopentenyl diphosphate (IPP) and dimethylallyl diphosphate (DMAPP). Acts in the terminal step of the DOXP/MEP pathway for isoprenoid precursor biosynthesis. The sequence is that of 4-hydroxy-3-methylbut-2-enyl diphosphate reductase from Acidithiobacillus ferrooxidans (strain ATCC 53993 / BNL-5-31) (Leptospirillum ferrooxidans (ATCC 53993)).